The primary structure comprises 574 residues: Putative DNA-directed RNA polymerase subunit alpha-like 1 (574 aa).

The tract at residues 1 to 352 (MTNNKNFADW…ELFSLFLQTS (352 aa)) is alpha N-terminal domain (alpha-NTD). Positions 419–574 (PDYDRYNSIT…RERKRGNREF (156 aa)) are alpha C-terminal domain (alpha-CTD). Residues 534–574 (QETLRKEQDEQSSQQQKDQMEKRRWERQNRERERKRGNREF) form a disordered region. Positions 551-574 (DQMEKRRWERQNRERERKRGNREF) are enriched in basic and acidic residues.

The protein belongs to the RNA polymerase alpha chain family. In plastids the minimal PEP RNA polymerase catalytic core is composed of four subunits: alpha, beta, beta', and beta''. When a (nuclear-encoded) sigma factor is associated with the core the holoenzyme is formed, which can initiate transcription.

The protein resides in the plastid. It localises to the chloroplast. The enzyme catalyses RNA(n) + a ribonucleoside 5'-triphosphate = RNA(n+1) + diphosphate. In terms of biological role, DNA-dependent RNA polymerase catalyzes the transcription of DNA into RNA using the four ribonucleoside triphosphates as substrates. This Pelargonium hortorum (Common geranium) protein is Putative DNA-directed RNA polymerase subunit alpha-like 1 (rpoAL1-A).